Here is a 99-residue protein sequence, read N- to C-terminus: Putative RNA-binding protein RbpE (99 aa).

Positions 2-79 (SIYVGNLSYS…RVLKVNKARP (78 aa)) constitute an RRM domain. Residues 78-99 (RPREEKGARSGGGSWSRNNGGY) form a disordered region. A compositionally biased stretch (gly residues) spans 86 to 99 (RSGGGSWSRNNGGY).

The protein is Putative RNA-binding protein RbpE (rbpE) of Nostoc sp. (strain PCC 7120 / SAG 25.82 / UTEX 2576).